Here is a 295-residue protein sequence, read N- to C-terminus: Beta-lactamase-like protein 2 homolog (295 aa).

The Zn(2+) site is built by His-79, His-81, Asp-83, His-84, His-141, Asp-160, and His-195.

Belongs to the metallo-beta-lactamase superfamily. Glyoxalase II family.

This Caenorhabditis elegans protein is Beta-lactamase-like protein 2 homolog.